Here is a 211-residue protein sequence, read N- to C-terminus: Tudor-interacting repair regulator protein (211 aa).

Residues Lys10 and Lys151 each participate in a glycyl lysine isopeptide (Lys-Gly) (interchain with G-Cter in ubiquitin) cross-link. Residues 118–205 (TLEQLHAVEI…TEKQKKALEK (88 aa)) are interaction with PXN.

This sequence belongs to the Nudix hydrolase family. TIRR subfamily. As to quaternary structure, homodimer. Interacts with TP53BP1 (via the Tudor-like domain); interaction is abolished following DNA damage and TP53BP1 phosphorylation by ATM. Interacts (via the cytoplasmic part) with SDC4. Interacts with TGFB1I1 and PXN.

The protein resides in the nucleus. Key regulator of TP53BP1 required to stabilize TP53BP1 and regulate its recruitment to chromatin. In absence of DNA damage, interacts with the tandem Tudor-like domain of TP53BP1, masking the region that binds histone H4 dimethylated at 'Lys-20' (H4K20me2), thereby preventing TP53BP1 recruitment to chromatin and maintaining TP53BP1 localization to the nucleus. Following DNA damage, ATM-induced phosphorylation of TP53BP1 and subsequent recruitment of RIF1 leads to dissociate NUDT16L1/TIRR from TP53BP1, unmasking the tandem Tudor-like domain and allowing recruitment of TP53BP1 to DNA double strand breaks (DSBs). Binds U8 snoRNA. The chain is Tudor-interacting repair regulator protein from Homo sapiens (Human).